The sequence spans 99 residues: MVPRIVNPLDEMLFKEVLKEQQRIKVYIERARYGKVKTIIEGIDEKEFDLEEIAKKLKAKLACGGTAKNGRIELQGDHRDRIKKLLAELGFSEELIEVE.

The protein belongs to the SUI1 family.

The polypeptide is Protein translation factor SUI1 homolog (Pyrococcus horikoshii (strain ATCC 700860 / DSM 12428 / JCM 9974 / NBRC 100139 / OT-3)).